The sequence spans 781 residues: uncharacterized protein (781 aa).

Disordered stretches follow at residues 1-27 (MKKD…ELDD) and 56-268 (NLHI…SDVH). Over residues 11 to 27 (ESLEEYDEENYTSELDD) the composition is skewed to acidic residues. The span at 57–73 (LHIDEKSKGNIHDDTNK) shows a compositional bias: basic and acidic residues. A compositionally biased stretch (basic residues) spans 80–94 (KRKGKLNNKKLKLKK). Positions 99 to 116 (SDEEEENDKNDKNDDDQY) are enriched in acidic residues. 4 stretches are compositionally biased toward basic and acidic residues: residues 123 to 144 (DEDR…KGDN), 170 to 188 (EKNH…HVSV), 216 to 227 (KTSKKNKNDKTN), and 251 to 268 (DDYH…SDVH). Positions 616–655 (NDTYTLSKLNNQINELTKKINILRGNLDKARKNHAAMKSN) form a coiled coil.

This is an uncharacterized protein from Plasmodium falciparum (isolate 3D7).